The sequence spans 177 residues: RNA pyrophosphohydrolase (177 aa).

Residues 6 to 149 (GYRPNVGIVI…KRDVYRRVMK (144 aa)) enclose the Nudix hydrolase domain. Residues 38–59 (GGINPGESAEQAMYRELFEEVG) carry the Nudix box motif.

It belongs to the Nudix hydrolase family. RppH subfamily. It depends on a divalent metal cation as a cofactor.

Accelerates the degradation of transcripts by removing pyrophosphate from the 5'-end of triphosphorylated RNA, leading to a more labile monophosphorylated state that can stimulate subsequent ribonuclease cleavage. This is RNA pyrophosphohydrolase from Pectobacterium carotovorum subsp. carotovorum (strain PC1).